Reading from the N-terminus, the 353-residue chain is Photosystem II protein D1 (353 aa).

T2 carries the N-acetylthreonine modification. T2 carries the phosphothreonine modification. A run of 3 helical transmembrane segments spans residues 29 to 46 (YIGWFGVLMIPTLLTATS), 118 to 133 (HFLLGVACYMGREWEL), and 142 to 156 (WIAVAYSAPVAAATA). Position 118 (H118) interacts with chlorophyll a. Residue Y126 coordinates pheophytin a. [CaMn4O5] cluster-binding residues include D170 and E189. A helical transmembrane segment spans residues 197–218 (FHMLGVAGVFGGSLFSAMHGSL). A chlorophyll a-binding site is contributed by H198. Residues H215 and 264-265 (SF) each bind a quinone. Residue H215 participates in Fe cation binding. A Fe cation-binding site is contributed by H272. A helical membrane pass occupies residues 274-288 (FLAAWPVVGIWFTAL). [CaMn4O5] cluster contacts are provided by H332, E333, D342, and A344. The propeptide occupies 345–353 (AVEAPSING).

This sequence belongs to the reaction center PufL/M/PsbA/D family. As to quaternary structure, PSII is composed of 1 copy each of membrane proteins PsbA, PsbB, PsbC, PsbD, PsbE, PsbF, PsbH, PsbI, PsbJ, PsbK, PsbL, PsbM, PsbT, PsbX, PsbY, PsbZ, Psb30/Ycf12, at least 3 peripheral proteins of the oxygen-evolving complex and a large number of cofactors. It forms dimeric complexes. Requires The D1/D2 heterodimer binds P680, chlorophylls that are the primary electron donor of PSII, and subsequent electron acceptors. It shares a non-heme iron and each subunit binds pheophytin, quinone, additional chlorophylls, carotenoids and lipids. D1 provides most of the ligands for the Mn4-Ca-O5 cluster of the oxygen-evolving complex (OEC). There is also a Cl(-1) ion associated with D1 and D2, which is required for oxygen evolution. The PSII complex binds additional chlorophylls, carotenoids and specific lipids. as cofactor. Post-translationally, tyr-161 forms a radical intermediate that is referred to as redox-active TyrZ, YZ or Y-Z. C-terminally processed by CTPA; processing is essential to allow assembly of the oxygen-evolving complex and thus photosynthetic growth.

The protein resides in the plastid. The protein localises to the chloroplast thylakoid membrane. It catalyses the reaction 2 a plastoquinone + 4 hnu + 2 H2O = 2 a plastoquinol + O2. Photosystem II (PSII) is a light-driven water:plastoquinone oxidoreductase that uses light energy to abstract electrons from H(2)O, generating O(2) and a proton gradient subsequently used for ATP formation. It consists of a core antenna complex that captures photons, and an electron transfer chain that converts photonic excitation into a charge separation. The D1/D2 (PsbA/PsbD) reaction center heterodimer binds P680, the primary electron donor of PSII as well as several subsequent electron acceptors. The protein is Photosystem II protein D1 of Chloranthus spicatus (Chulantree).